The sequence spans 193 residues: DNA damage-inducible transcript 4-like protein (193 aa).

The protein belongs to the DDIT4 family.

The protein resides in the cytoplasm. Functionally, inhibits cell growth by regulating the TOR signaling pathway upstream of the TSC1-TSC2 complex and downstream of AKT1. In Mus musculus (Mouse), this protein is DNA damage-inducible transcript 4-like protein (Ddit4l).